Reading from the N-terminus, the 540-residue chain is Keratin, type II cytoskeletal 73 (540 aa).

Residues 1–131 are head; it reads MSRQFTYKSG…DPEIQKVRAQ (131 aa). The segment at 132 to 167 is coil 1A; it reads EREQIKVLNNKFASFIDKVRFLEQQNQVLETKWELL. The IF rod domain maps to 132 to 445; that stretch reads EREQIKVLNN…KLLEGEECRM (314 aa). The tract at residues 168-186 is linker 1; that stretch reads QQLDLNNCKNNLEPILEGY. The segment at 187 to 278 is coil 1B; sequence ISNLRKQLET…CLYEGETAQI (92 aa). The segment at 279 to 302 is linker 12; that stretch reads QSHISDTSIILSMDNNRNLDLDSI. Positions 303-441 are coil 2; it reads IAEVRAQYEE…ATYRKLLEGE (139 aa). Positions 442–540 are tail; sequence ECRMSGEYTN…LSSPTKKTMR (99 aa). Positions 502-540 are disordered; the sequence is SGNCSPRGEARTRLGSASEFRDSQGKTLALSSPTKKTMR. Positions 526 to 540 are enriched in polar residues; the sequence is GKTLALSSPTKKTMR.

The protein belongs to the intermediate filament family. As to quaternary structure, heterotetramer of two type I and two type II keratins. Highly expressed in hair follicles from scalp. In hair, it is specifically present in the inner root sheath (IRS) of the hair follicle. Present in the IRS cuticle, but not in Henle or Huxley layers of the IRS. In the IRS cuticle, it is expressed between the lowermost bulb region of the cuticle and the region where Henle cells undergo abrupt terminal differentiation. Detected up to the uppermost cortex region where cuticle cells terminally differentiate (at protein level).

In terms of biological role, has a role in hair formation. Specific component of keratin intermediate filaments in the inner root sheath (IRS) of the hair follicle. The chain is Keratin, type II cytoskeletal 73 (KRT73) from Homo sapiens (Human).